Here is a 358-residue protein sequence, read N- to C-terminus: Fructose-bisphosphate aldolase (358 aa).

Serine 62 is a D-glyceraldehyde 3-phosphate binding site. The Proton donor role is filled by aspartate 109. Positions 110, 144, 174, and 226 each coordinate Zn(2+). Glycine 227 contacts dihydroxyacetone phosphate. Position 264 (histidine 264) interacts with Zn(2+). Residues 265–267 (GGS) and 286–289 (NIDT) contribute to the dihydroxyacetone phosphate site.

Belongs to the class II fructose-bisphosphate aldolase family. Requires Zn(2+) as cofactor.

The catalysed reaction is beta-D-fructose 1,6-bisphosphate = D-glyceraldehyde 3-phosphate + dihydroxyacetone phosphate. It participates in carbohydrate degradation; glycolysis; D-glyceraldehyde 3-phosphate and glycerone phosphate from D-glucose: step 4/4. In terms of biological role, catalyzes the aldol condensation of dihydroxyacetone phosphate (DHAP or glycerone-phosphate) with glyceraldehyde 3-phosphate (G3P) to form fructose 1,6-bisphosphate (FBP) in gluconeogenesis and the reverse reaction in glycolysis. This chain is Fructose-bisphosphate aldolase (fba), found in Edwardsiella ictaluri (strain 93-146).